A 201-amino-acid polypeptide reads, in one-letter code: Protease (201 aa).

Active-site residues include His-56, Asp-73, and Cys-121.

The protein belongs to the peptidase C5 family. As to quaternary structure, interacts with protease cofactor pVI-C; this interaction is necessary for protease activation.

Its subcellular location is the virion. It localises to the host nucleus. The catalysed reaction is Cleaves proteins of the adenovirus and its host cell at two consensus sites: -Yaa-Xaa-Gly-Gly-|-Xaa- and -Yaa-Xaa-Gly-Xaa-|-Gly- (in which Yaa is Met, Ile or Leu, and Xaa is any amino acid).. Its activity is regulated as follows. Requires DNA and protease cofactor for maximal activation. Inside nascent virions, becomes partially activated by binding to the viral DNA, allowing it to cleave the cofactor that binds to the protease and fully activates it. Actin, like the viral protease cofactor, seems to act as a cofactor in the cleavage of cytokeratin 18 and of actin itself. Its function is as follows. Cleaves viral precursor proteins (pTP, pIIIa, pVI, pVII, pVIII, and pX) inside newly assembled particles giving rise to mature virions. Protease complexed to its cofactor slides along the viral DNA to specifically locate and cleave the viral precursors. Mature virions have a weakened organization compared to the unmature virions, thereby facilitating subsequent uncoating. Without maturation, the particle lacks infectivity and is unable to uncoat. Late in adenovirus infection, in the cytoplasm, may participate in the cytoskeleton destruction. Cleaves host cell cytoskeletal keratins K7 and K18. This is Protease from Homo sapiens (Human).